The sequence spans 438 residues: GDP-mannose 6-dehydrogenase (438 aa).

Residues Y10, V11, D30, K35, T86, and T124 each coordinate NAD(+). GDP-alpha-D-mannuronate contacts are provided by E161, K210, N214, H217, N225, Y256, Y257, R259, F262, and G265. Residue C268 is part of the active site. K271 is an NAD(+) binding site. Position 324 (K324) interacts with GDP-alpha-D-mannuronate. R331 provides a ligand contact to NAD(+).

This sequence belongs to the UDP-glucose/GDP-mannose dehydrogenase family.

The enzyme catalyses GDP-alpha-D-mannose + 2 NAD(+) + H2O = GDP-alpha-D-mannuronate + 2 NADH + 3 H(+). It functions in the pathway glycan biosynthesis; alginate biosynthesis. In terms of biological role, catalyzes the oxidation of guanosine diphospho-D-mannose (GDP-D-mannose) to GDP-D-mannuronic acid, a precursor for alginate polymerization. The alginate layer causes a mucoid phenotype and provides a protective barrier against host immune defenses and antibiotics. This is GDP-mannose 6-dehydrogenase (algD) from Pseudomonas syringae pv. syringae.